Consider the following 127-residue polypeptide: Large-conductance mechanosensitive channel (127 aa).

3 helical membrane passes run 19–39, 42–62, and 67–87; these read VGVIVGAAFTAIVNSLVTNII, LLGIFVGSIDFSNLVFTVGSA, and GAFINSVINFLIIAFVVFLLI.

Belongs to the MscL family. In terms of assembly, homopentamer.

It is found in the cell membrane. Its function is as follows. Channel that opens in response to stretch forces in the membrane lipid bilayer. May participate in the regulation of osmotic pressure changes within the cell. The polypeptide is Large-conductance mechanosensitive channel (Levilactobacillus brevis (strain ATCC 367 / BCRC 12310 / CIP 105137 / JCM 1170 / LMG 11437 / NCIMB 947 / NCTC 947) (Lactobacillus brevis)).